Reading from the N-terminus, the 491-residue chain is Hydroxymethylglutaryl-CoA synthase (491 aa).

The Proton donor/acceptor role is filled by glutamate 127. Cysteine 159 functions as the Acyl-thioester intermediate in the catalytic mechanism. (3S)-3-hydroxy-3-methylglutaryl-CoA contacts are provided by cysteine 159, threonine 201, and serine 250. Serine 276 carries the phosphoserine modification. The Proton donor/acceptor role is filled by histidine 296. Histidine 296, lysine 305, asparagine 371, and serine 405 together coordinate (3S)-3-hydroxy-3-methylglutaryl-CoA.

Belongs to the thiolase-like superfamily. HMG-CoA synthase family.

It catalyses the reaction acetoacetyl-CoA + acetyl-CoA + H2O = (3S)-3-hydroxy-3-methylglutaryl-CoA + CoA + H(+). Its pathway is metabolic intermediate biosynthesis; (R)-mevalonate biosynthesis; (R)-mevalonate from acetyl-CoA: step 2/3. Its function is as follows. Hydroxymethylglutaryl-CoA synthase; part of the first module of ergosterol biosynthesis pathway that includes the early steps of the pathway, conserved across all eukaryotes, and which results in the formation of mevalonate from acetyl-coenzyme A (acetyl-CoA). ERG13 condenses acetyl-CoA with acetoacetyl-CoA to form hydroxymethylglutaryl-CoA (HMG-CoA). The first module starts with the action of the cytosolic acetyl-CoA acetyltransferase ERG10 that catalyzes the formation of acetoacetyl-CoA. The hydroxymethylglutaryl-CoA synthase ERG13 then condenses acetyl-CoA with acetoacetyl-CoA to form HMG-CoA. The rate-limiting step of the early module is the reduction to mevalonate by the 3-hydroxy-3-methylglutaryl-coenzyme A (HMG-CoA) reductases HMG1 and HMG2 which are derived from a single ancestral HMGR gene by gene duplication. In Saccharomyces cerevisiae (strain ATCC 204508 / S288c) (Baker's yeast), this protein is Hydroxymethylglutaryl-CoA synthase.